Here is a 151-residue protein sequence, read N- to C-terminus: ALK and LTK ligand 2 (151 aa).

The signal sequence occupies residues 1–25 (MRVSGRPMLLALLLLLSTVGDPGHA). 2 cysteine pairs are disulfide-bonded: Cys-112–Cys-148 and Cys-126–Cys-135.

The protein belongs to the ALKAL family. Homodimer.

It is found in the secreted. Its subcellular location is the cell membrane. Cytokine that acts as a physiological ligand for receptor tyrosine kinases LTK and ALK, leading to their activation. Cytokine-binding is sufficient to activate LTK. In contrast, ALKAL2-driven activation of ALK is coupled with heparin-binding to ALK. Stimulation of ALK signaling is involved in neural development and regulation of energy expenditure. This chain is ALK and LTK ligand 2, found in Rattus norvegicus (Rat).